The following is a 229-amino-acid chain: Uridylate kinase (229 aa).

Residue 11 to 12 coordinates ATP; that stretch reads GS. Gly45 is a UMP binding site. Residues Gly46 and Arg50 each contribute to the ATP site. UMP contacts are provided by residues Asp67 and 114 to 120; that span reads TEPGHTT. ATP contacts are provided by Thr140, Tyr146, and Asp149.

This sequence belongs to the UMP kinase family. Homohexamer.

It localises to the cytoplasm. The enzyme catalyses UMP + ATP = UDP + ADP. The protein operates within pyrimidine metabolism; CTP biosynthesis via de novo pathway; UDP from UMP (UMPK route): step 1/1. With respect to regulation, inhibited by UTP. In terms of biological role, catalyzes the reversible phosphorylation of UMP to UDP. This is Uridylate kinase from Thermoplasma acidophilum (strain ATCC 25905 / DSM 1728 / JCM 9062 / NBRC 15155 / AMRC-C165).